Consider the following 149-residue polypeptide: Protegrin-4 (149 aa).

The signal sequence occupies residues 1–29; that stretch reads METQRASLCLGRWSLWLLLLALVVPSASA. Residues 30 to 130 constitute a propeptide that is removed on maturation; it reads QALSYREAVL…DITCNEVQGV (101 aa). The disordered stretch occupies residues 61-80; the sequence is DQPPKADEDPGTPKPVSFTV. Cystine bridges form between Cys-85/Cys-96, Cys-107/Cys-124, Cys-136/Cys-145, and Cys-138/Cys-143. Position 148 is an arginine amide (Arg-148).

The protein belongs to the cathelicidin family.

The protein resides in the secreted. Microbicidal activity. This chain is Protegrin-4 (NPG4), found in Sus scrofa (Pig).